A 457-amino-acid polypeptide reads, in one-letter code: Exodeoxyribonuclease 7 large subunit (457 aa).

This sequence belongs to the XseA family. In terms of assembly, heterooligomer composed of large and small subunits.

The protein localises to the cytoplasm. It carries out the reaction Exonucleolytic cleavage in either 5'- to 3'- or 3'- to 5'-direction to yield nucleoside 5'-phosphates.. In terms of biological role, bidirectionally degrades single-stranded DNA into large acid-insoluble oligonucleotides, which are then degraded further into small acid-soluble oligonucleotides. The sequence is that of Exodeoxyribonuclease 7 large subunit from Photorhabdus laumondii subsp. laumondii (strain DSM 15139 / CIP 105565 / TT01) (Photorhabdus luminescens subsp. laumondii).